Here is a 333-residue protein sequence, read N- to C-terminus: Tetraacyldisaccharide 4'-kinase (333 aa).

ATP is bound at residue 55 to 62 (TIGGNGKT).

It belongs to the LpxK family.

It catalyses the reaction a lipid A disaccharide + ATP = a lipid IVA + ADP + H(+). It functions in the pathway glycolipid biosynthesis; lipid IV(A) biosynthesis; lipid IV(A) from (3R)-3-hydroxytetradecanoyl-[acyl-carrier-protein] and UDP-N-acetyl-alpha-D-glucosamine: step 6/6. Its function is as follows. Transfers the gamma-phosphate of ATP to the 4'-position of a tetraacyldisaccharide 1-phosphate intermediate (termed DS-1-P) to form tetraacyldisaccharide 1,4'-bis-phosphate (lipid IVA). The protein is Tetraacyldisaccharide 4'-kinase of Blochmanniella floridana.